The following is a 389-amino-acid chain: Oxysterol-binding protein 1 (389 aa).

Coiled-coil stretches lie at residues 1-31 (MGKK…NKPA) and 340-371 (KDDV…DEWK). Residues 1 to 43 (MGKKDKNVSVEEEVDEAEIEKLAAENANKPAPQLTKEDLDAMD) form a disordered region.

This sequence belongs to the OSBP family. Interacts with dstC.

The protein resides in the cytoplasm. Functionally, may play a role in the regulation of the slug-fruiting body switch. The protein is Oxysterol-binding protein 1 (osbA) of Dictyostelium discoideum (Social amoeba).